The primary structure comprises 59 residues: Large ribosomal subunit protein bL32 (59 aa).

Residues 1-16 (MAVPKRKTSPSRRGMR) are compositionally biased toward basic residues. The tract at residues 1–59 (MAVPKRKTSPSRRGMRRSADALKAPTYVEDKNSGELRRPHHIDLKSGMYRGRQVLEPKE) is disordered. The segment covering 28 to 44 (VEDKNSGELRRPHHIDL) has biased composition (basic and acidic residues).

The protein belongs to the bacterial ribosomal protein bL32 family.

The sequence is that of Large ribosomal subunit protein bL32 from Brucella abortus (strain S19).